The sequence spans 410 residues: Divergent protein kinase domain 1A (410 aa).

The Cytoplasmic portion of the chain corresponds to 1–5 (MARLS). Residues 6–26 (YVRIKYLFFSWLAVFIGSWVI) traverse the membrane as a helical segment. Residues 27–410 (YVRYNSYTEL…WKKISHTNDS (384 aa)) are Lumenal-facing.

The protein belongs to the DIPK family. Post-translationally, among the many cysteines in the lumenal domain, most are probably involved in disulfide bonds.

It localises to the endoplasmic reticulum membrane. The chain is Divergent protein kinase domain 1A (dipk1a) from Xenopus laevis (African clawed frog).